Consider the following 503-residue polypeptide: Aspartyl/glutamyl-tRNA(Asn/Gln) amidotransferase subunit B (503 aa).

Belongs to the GatB/GatE family. GatB subfamily. Heterotrimer of A, B and C subunits.

The enzyme catalyses L-glutamyl-tRNA(Gln) + L-glutamine + ATP + H2O = L-glutaminyl-tRNA(Gln) + L-glutamate + ADP + phosphate + H(+). It carries out the reaction L-aspartyl-tRNA(Asn) + L-glutamine + ATP + H2O = L-asparaginyl-tRNA(Asn) + L-glutamate + ADP + phosphate + 2 H(+). Allows the formation of correctly charged Asn-tRNA(Asn) or Gln-tRNA(Gln) through the transamidation of misacylated Asp-tRNA(Asn) or Glu-tRNA(Gln) in organisms which lack either or both of asparaginyl-tRNA or glutaminyl-tRNA synthetases. The reaction takes place in the presence of glutamine and ATP through an activated phospho-Asp-tRNA(Asn) or phospho-Glu-tRNA(Gln). This is Aspartyl/glutamyl-tRNA(Asn/Gln) amidotransferase subunit B from Rhodococcus erythropolis (strain PR4 / NBRC 100887).